The primary structure comprises 381 residues: Succinyl-diaminopimelate desuccinylase (381 aa).

A Zn(2+)-binding site is contributed by His-76. Residue Asp-78 is part of the active site. Asp-107 is a Zn(2+) binding site. Catalysis depends on Glu-140, which acts as the Proton acceptor. Residues Glu-141, Glu-169, and His-354 each coordinate Zn(2+).

It belongs to the peptidase M20A family. DapE subfamily. Homodimer. Zn(2+) is required as a cofactor. The cofactor is Co(2+).

It catalyses the reaction N-succinyl-(2S,6S)-2,6-diaminopimelate + H2O = (2S,6S)-2,6-diaminopimelate + succinate. Its pathway is amino-acid biosynthesis; L-lysine biosynthesis via DAP pathway; LL-2,6-diaminopimelate from (S)-tetrahydrodipicolinate (succinylase route): step 3/3. Functionally, catalyzes the hydrolysis of N-succinyl-L,L-diaminopimelic acid (SDAP), forming succinate and LL-2,6-diaminopimelate (DAP), an intermediate involved in the bacterial biosynthesis of lysine and meso-diaminopimelic acid, an essential component of bacterial cell walls. This is Succinyl-diaminopimelate desuccinylase from Gluconobacter oxydans (strain 621H) (Gluconobacter suboxydans).